The primary structure comprises 275 residues: Elongation factor Ts (275 aa).

Residues 76 to 79 (TDFV) are involved in Mg(2+) ion dislocation from EF-Tu.

It belongs to the EF-Ts family.

The protein localises to the cytoplasm. In terms of biological role, associates with the EF-Tu.GDP complex and induces the exchange of GDP to GTP. It remains bound to the aminoacyl-tRNA.EF-Tu.GTP complex up to the GTP hydrolysis stage on the ribosome. The polypeptide is Elongation factor Ts (Rhodococcus jostii (strain RHA1)).